The chain runs to 949 residues: Translation initiation factor IF-2 (949 aa).

Disordered stretches follow at residues Phe50–Arg206 and Gln220–Lys359. Basic and acidic residues-rich tracts occupy residues Glu52 to Lys84 and Phe104 to Ser143. Composition is skewed to polar residues over residues Lys144–Gln154 and Gly164–Pro180. Residues Asn187–Arg206 show a composition bias toward low complexity. Residues Tyr224–Pro275 are compositionally biased toward basic and acidic residues. A compositionally biased stretch (low complexity) spans Lys319–Asn336. The tr-type G domain occupies Glu450–Lys619. Residues Gly459 to Thr466 are G1. Residue Gly459 to Thr466 coordinates GTP. The interval Gly484–His488 is G2. Positions Asp505–Gly508 are G3. Residues Asp505 to His509 and Asn559 to Asp562 each bind GTP. The tract at residues Asn559–Asp562 is G4. The segment at Ser595–Lys597 is G5.

Belongs to the TRAFAC class translation factor GTPase superfamily. Classic translation factor GTPase family. IF-2 subfamily.

Its subcellular location is the cytoplasm. Functionally, one of the essential components for the initiation of protein synthesis. Protects formylmethionyl-tRNA from spontaneous hydrolysis and promotes its binding to the 30S ribosomal subunits. Also involved in the hydrolysis of GTP during the formation of the 70S ribosomal complex. The sequence is that of Translation initiation factor IF-2 from Streptococcus uberis (strain ATCC BAA-854 / 0140J).